The sequence spans 37 residues: uncharacterized protein (37 aa).

This is an uncharacterized protein from Archaeoglobus fulgidus (strain ATCC 49558 / DSM 4304 / JCM 9628 / NBRC 100126 / VC-16).